A 459-amino-acid polypeptide reads, in one-letter code: Disease resistance protein CHL1 (459 aa).

The TIR domain occupies 16–170 (REVDVFLSFC…QIARDISLVV (155 aa)). Residue glutamate 89 is part of the active site. Positions 191-401 (VYDLLALEVN…LLKLKAKQGG (211 aa)) constitute an NB-ARC domain. Basic and acidic residues predominate over residues 429–440 (ERKESSQDKSQQ). A disordered region spans residues 429–459 (ERKESSQDKSQQESEVAADILIGKESSQDKQ).

As to expression, mostly expressed in leaves, stems and roots, and, to a lower extent, in flowers and siliques.

It localises to the cytoplasm. The enzyme catalyses NAD(+) + H2O = ADP-D-ribose + nicotinamide + H(+). Confers resistance to low temperatures by limiting chloroplast damage and cell death, thus maintaining growth homeostasis. The protein is Disease resistance protein CHL1 of Arabidopsis thaliana (Mouse-ear cress).